Consider the following 298-residue polypeptide: Ribosomal protein L11 methyltransferase (298 aa).

Residues T148, G169, D191, and N233 each coordinate S-adenosyl-L-methionine.

Belongs to the methyltransferase superfamily. PrmA family.

Its subcellular location is the cytoplasm. It catalyses the reaction L-lysyl-[protein] + 3 S-adenosyl-L-methionine = N(6),N(6),N(6)-trimethyl-L-lysyl-[protein] + 3 S-adenosyl-L-homocysteine + 3 H(+). Its function is as follows. Methylates ribosomal protein L11. This chain is Ribosomal protein L11 methyltransferase, found in Marinobacter nauticus (strain ATCC 700491 / DSM 11845 / VT8) (Marinobacter aquaeolei).